We begin with the raw amino-acid sequence, 714 residues long: DNA ligase (714 aa).

NAD(+)-binding positions include aspartate 48–aspartate 52, serine 97–leucine 98, and glutamate 129. Residue lysine 131 is the N6-AMP-lysine intermediate of the active site. NAD(+) is bound by residues arginine 152, glutamate 189, lysine 307, and lysine 331. Zn(2+)-binding residues include cysteine 436, cysteine 439, cysteine 454, and cysteine 460. The BRCT domain occupies lysine 637–glycine 714.

Belongs to the NAD-dependent DNA ligase family. LigA subfamily. Mg(2+) serves as cofactor. Mn(2+) is required as a cofactor.

The enzyme catalyses NAD(+) + (deoxyribonucleotide)n-3'-hydroxyl + 5'-phospho-(deoxyribonucleotide)m = (deoxyribonucleotide)n+m + AMP + beta-nicotinamide D-nucleotide.. Functionally, DNA ligase that catalyzes the formation of phosphodiester linkages between 5'-phosphoryl and 3'-hydroxyl groups in double-stranded DNA using NAD as a coenzyme and as the energy source for the reaction. It is essential for DNA replication and repair of damaged DNA. The protein is DNA ligase of Rhodopseudomonas palustris (strain BisB5).